A 1164-amino-acid chain; its full sequence is MPTMRRTVSEIRSRAEGYEKTDDVSEKTSLADQEEVRTIFINQPQLTKFCNNHVSTAKYNIITFLPRFLYSQFRRAANSFFLFIALLQQIPDVSPTGRYTTLVPLLFILAVAAIKEIIEDIKRHKADNAVNKKQTQVLRNGAWEIVHWEKVAVGEIVKVTNGEHLPADLISLSSSEPQAMCYIETSNLDGETNLKIRQGLPATSDIKDVDSLMRISGRIECESPNRHLYDFVGNIRLDGHGTVPLGADQILLRGAQLRNTQWVHGIVVYTGHDTKLMQNSTSPPLKLSNVERITNVQILILFCILIAMSLVCSVGSAIWNRRHSGKDWYLNLNYGGASNFGLNFLTFIILFNNLIPISLLVTLEVVKFTQAYFINWDLDMHYEPTDTAAMARTSNLNEELGQVKYIFSDKTGTLTCNVMQFKKCTIAGVAYGHVPEPEDYGCSPDEWQNSQFGDEKTFSDSSLLENLQNNHPTAPIICEFLTMMAVCHTAVPEREGDKIIYQAASPDEGALVRAAKQLNFVFTGRTPDSVIIDSLGQEERYELLNVLEFTSARKRMSVIVRTPSGKLRLYCKGADTVIYDRLAETSKYKEITLKHLEQFATEGLRTLCFAVAEISESDFQEWRAVYQRASTSVQNRLLKLEESYELIEKNLQLLGATAIEDKLQDQVPETIETLMKADIKIWILTGDKQETAINIGHSCKLLKKNMGMIVINEGSLDGTRETLSRHCTTLGDALRKENDFALIIDGKTLKYALTFGVRQYFLDLALSCKAVICCRVSPLQKSEVVEMVKKQVKVVTLAIGDGANDVSMIQTAHVGVGISGNEGLQAANSSDYSIAQFKYLKNLLMIHGAWNYNRVSKCILYCFYKNIVLYIIEIWFAFVNGFSGQILFERWCIGLYNVMFTAMPPLTLGIFERSCRKENMLKYPELYKTSQNALDFNTKVFWVHCLNGLFHSVILFWFPLKALQYGTAFGNGKTSDYLLLGNFVYTFVVITVCLKAGLETSYWTWFSHIAIWGSIALWVVFFGIYSSLWPAIPMAPDMSGEAAMLFSSGVFWMGLLFIPVASLLLDVVYKVIKRTAFKTLVDEVQELEAKSQDPGAVVLGKSLTERAQLLKNVFKKNHVNLYRSESLQQNLLHGYAFSQDENGIVSQSEVIRAYDTTKQRPDEW.

The Cytoplasmic segment spans residues methionine 1–leucine 65. Phosphoserine is present on serine 25. Threonine 28 carries the post-translational modification Phosphothreonine. Serine 29 is subject to Phosphoserine. A helical transmembrane segment spans residues proline 66–leucine 86. At leucine 87 to aspartate 92 the chain is on the exoplasmic loop side. The helical transmembrane segment at valine 93 to lysine 115 threads the bilayer. The Cytoplasmic portion of the chain corresponds to glutamate 116–glutamine 297. A helical membrane pass occupies residues isoleucine 298–tryptophan 319. Residues asparagine 320 to phenylalanine 344 lie on the Exoplasmic loop side of the membrane. A helical transmembrane segment spans residues leucine 345–valine 366. Topologically, residues lysine 367–lysine 857 are cytoplasmic. Catalysis depends on aspartate 409, which acts as the 4-aspartylphosphate intermediate. 3 residues coordinate ATP: aspartate 409, lysine 410, and threonine 411. Aspartate 409 lines the Mg(2+) pocket. Mg(2+) is bound at residue threonine 411. Serine 443 is modified (phosphoserine). Residues glutamate 508, phenylalanine 549, lysine 572, arginine 605, threonine 685, glycine 686, aspartate 687, alanine 741–threonine 748, arginine 775, and lysine 781 contribute to the ATP site. Residue aspartate 801 participates in Mg(2+) binding. Residues asparagine 804 and aspartate 805 each contribute to the ATP site. Aspartate 805 contacts Mg(2+). A helical transmembrane segment spans residues cysteine 858–phenylalanine 878. Over valine 879–arginine 890 the chain is Exoplasmic loop. The helical transmembrane segment at tryptophan 891–isoleucine 910 threads the bilayer. The Cytoplasmic segment spans residues phenylalanine 911–valine 940. The chain crosses the membrane as a helical span at residues phenylalanine 941 to alanine 962. The Exoplasmic loop portion of the chain corresponds to leucine 963–aspartate 976. The chain crosses the membrane as a helical span at residues tyrosine 977–glutamate 999. The Cytoplasmic segment spans residues threonine 1000–tryptophan 1005. A helical transmembrane segment spans residues phenylalanine 1006–serine 1026. Over serine 1027–methionine 1044 the chain is Exoplasmic loop. The helical transmembrane segment at leucine 1045–lysine 1070 threads the bilayer. Residues valine 1071 to tryptophan 1164 are Cytoplasmic-facing. Glycine 1095–serine 1102 is an ATP binding site. Serine 1126 is modified (phosphoserine).

It belongs to the cation transport ATPase (P-type) (TC 3.A.3) family. Type IV subfamily. Component of a P4-ATPase flippase complex which consists of a catalytic alpha subunit and an accessory beta subunit. Interacts with TMEM30A to form a flippase complex; this complex forms an intermediate phosphoenzyme. Interacts with TMEM30B; this interaction is reported conflictingly. Mg(2+) serves as cofactor. In terms of processing, cleaved by calpain in a caspase- and calcium influx-dependent manner during platelet apoptosis leading to a 100 kDa polypeptide. In terms of tissue distribution, found in most adult tissues except liver, testis and placenta. Most abundant in heart, brain and skeletal muscle. Also detected in fetal tissues. Isoform 1 is only detected in brain, skeletal muscle and heart and is the most abundant form in skeletal muscle. Highly expressed in platelets.

The protein localises to the cytoplasmic vesicle. The protein resides in the secretory vesicle. It is found in the chromaffin granule membrane. It localises to the cytoplasmic granule. Its subcellular location is the cell membrane. The protein localises to the endoplasmic reticulum. The protein resides in the golgi apparatus. It catalyses the reaction ATP + H2O + phospholipidSide 1 = ADP + phosphate + phospholipidSide 2.. The catalysed reaction is a 1,2-diacyl-sn-glycero-3-phospho-L-serine(out) + ATP + H2O = a 1,2-diacyl-sn-glycero-3-phospho-L-serine(in) + ADP + phosphate + H(+). Its activity is regulated as follows. ATPase activity is stimulated by phosphatidylserine (PS) and minimally by phosphatidylethanolamine (PE). ATPase activity is inhibited by beryllium fluoride and aluminum trifluoride. Its function is as follows. Catalytic component of a P4-ATPase flippase complex which catalyzes the hydrolysis of ATP coupled to the transport of aminophospholipids from the outer to the inner leaflet of various membranes and ensures the maintenance of asymmetric distribution of phospholipids. Phospholipid translocation also seems to be implicated in vesicle formation and in uptake of lipid signaling molecules. In vitro, its ATPase activity is selectively and stereospecifically stimulated by phosphatidylserine (PS). The flippase complex ATP8A1:TMEM30A seems to play a role in regulation of cell migration probably involving flippase-mediated translocation of phosphatidylethanolamine (PE) at the cell membrane. Acts as aminophospholipid translocase at the cell membrane in neuronal cells. The protein is Phospholipid-transporting ATPase IA of Homo sapiens (Human).